A 424-amino-acid polypeptide reads, in one-letter code: uncharacterized protein (424 aa).

Transmembrane regions (helical) follow at residues 9–29 (ITWI…GILI), 41–61 (ASLF…GTLA), 86–106 (GAIL…IIAL), 119–139 (ADWQ…LLHM), 148–168 (ISTL…AVSL), 184–204 (WSAA…WEMI), 222–242 (LFLA…VTVG), 270–290 (VTVC…IAGF), 320–340 (VLTA…LFQI), 345–365 (LLKG…AAAL), and 377–397 (MALG…WALL).

The protein belongs to the amino acid-polyamine-organocation (APC) superfamily.

The protein resides in the cell membrane. This is an uncharacterized protein from Bacillus subtilis (strain 168).